Reading from the N-terminus, the 376-residue chain is Mitogen-activated protein kinase 2 (376 aa).

A Protein kinase domain is found at 32-319; the sequence is YVPIKPIGRG…VTEALQHPYM (288 aa). ATP contacts are provided by residues 38–46 and K61; that span reads IGRGAYGVV. D158 serves as the catalytic Proton acceptor. Phosphothreonine is present on T191. A TXY motif is present at residues 191–193; sequence TEY. The residue at position 193 (Y193) is a Phosphotyrosine. T196 is modified (phosphothreonine).

Belongs to the protein kinase superfamily. CMGC Ser/Thr protein kinase family. MAP kinase subfamily. Interacts with MKK3. In terms of processing, dually phosphorylated on Thr-191 and Tyr-193, which activates the enzyme. Phosphorylated on Ser residue. Highest levels in the stem. Present in the leaf, root and flower, but not in seeds.

The catalysed reaction is L-seryl-[protein] + ATP = O-phospho-L-seryl-[protein] + ADP + H(+). It carries out the reaction L-threonyl-[protein] + ATP = O-phospho-L-threonyl-[protein] + ADP + H(+). Activated by threonine and tyrosine phosphorylation. The protein is Mitogen-activated protein kinase 2 (MPK2) of Arabidopsis thaliana (Mouse-ear cress).